A 330-amino-acid polypeptide reads, in one-letter code: Glycerol-3-phosphate dehydrogenase [NAD(P)+] (330 aa).

Positions 10, 11, 31, and 105 each coordinate NADPH. Sn-glycerol 3-phosphate contacts are provided by Lys105, Gly135, and Ser137. Ala139 serves as a coordination point for NADPH. Residues Lys190, Asp243, Ser253, Arg254, and Asn255 each contribute to the sn-glycerol 3-phosphate site. The active-site Proton acceptor is Lys190. Arg254 lines the NADPH pocket. Residues Val278 and Glu280 each coordinate NADPH.

The protein belongs to the NAD-dependent glycerol-3-phosphate dehydrogenase family.

The protein resides in the cytoplasm. It carries out the reaction sn-glycerol 3-phosphate + NAD(+) = dihydroxyacetone phosphate + NADH + H(+). The enzyme catalyses sn-glycerol 3-phosphate + NADP(+) = dihydroxyacetone phosphate + NADPH + H(+). Its pathway is membrane lipid metabolism; glycerophospholipid metabolism. In terms of biological role, catalyzes the reduction of the glycolytic intermediate dihydroxyacetone phosphate (DHAP) to sn-glycerol 3-phosphate (G3P), the key precursor for phospholipid synthesis. This chain is Glycerol-3-phosphate dehydrogenase [NAD(P)+], found in Nitratidesulfovibrio vulgaris (strain ATCC 29579 / DSM 644 / CCUG 34227 / NCIMB 8303 / VKM B-1760 / Hildenborough) (Desulfovibrio vulgaris).